A 264-amino-acid polypeptide reads, in one-letter code: Thiazole synthase (264 aa).

Residue Lys-106 is the Schiff-base intermediate with DXP of the active site. 1-deoxy-D-xylulose 5-phosphate-binding positions include Gly-167, 193 to 194 (AG), and 215 to 216 (NT).

This sequence belongs to the ThiG family. In terms of assembly, homotetramer. Forms heterodimers with either ThiH or ThiS.

Its subcellular location is the cytoplasm. The enzyme catalyses [ThiS sulfur-carrier protein]-C-terminal-Gly-aminoethanethioate + 2-iminoacetate + 1-deoxy-D-xylulose 5-phosphate = [ThiS sulfur-carrier protein]-C-terminal Gly-Gly + 2-[(2R,5Z)-2-carboxy-4-methylthiazol-5(2H)-ylidene]ethyl phosphate + 2 H2O + H(+). It participates in cofactor biosynthesis; thiamine diphosphate biosynthesis. Catalyzes the rearrangement of 1-deoxy-D-xylulose 5-phosphate (DXP) to produce the thiazole phosphate moiety of thiamine. Sulfur is provided by the thiocarboxylate moiety of the carrier protein ThiS. In vitro, sulfur can be provided by H(2)S. This is Thiazole synthase from Thioalkalivibrio sulfidiphilus (strain HL-EbGR7).